Consider the following 40-residue polypeptide: Photosystem II reaction center protein J (40 aa).

The chain crosses the membrane as a helical span at residues 8 to 28; that stretch reads IPLWLIGTVAGIAVIGLVGVF.

It belongs to the PsbJ family. As to quaternary structure, PSII is composed of 1 copy each of membrane proteins PsbA, PsbB, PsbC, PsbD, PsbE, PsbF, PsbH, PsbI, PsbJ, PsbK, PsbL, PsbM, PsbT, PsbX, PsbY, PsbZ, Psb30/Ycf12, at least 3 peripheral proteins of the oxygen-evolving complex and a large number of cofactors. It forms dimeric complexes.

The protein localises to the plastid. It localises to the chloroplast thylakoid membrane. One of the components of the core complex of photosystem II (PSII). PSII is a light-driven water:plastoquinone oxidoreductase that uses light energy to abstract electrons from H(2)O, generating O(2) and a proton gradient subsequently used for ATP formation. It consists of a core antenna complex that captures photons, and an electron transfer chain that converts photonic excitation into a charge separation. The sequence is that of Photosystem II reaction center protein J from Secale cereale (Rye).